Reading from the N-terminus, the 89-residue chain is Large ribosomal subunit protein bL27 (89 aa).

The protein belongs to the bacterial ribosomal protein bL27 family.

This chain is Large ribosomal subunit protein bL27, found in Cytophaga hutchinsonii (strain ATCC 33406 / DSM 1761 / CIP 103989 / NBRC 15051 / NCIMB 9469 / D465).